The chain runs to 250 residues: 3-deoxy-manno-octulosonate cytidylyltransferase (250 aa).

It belongs to the KdsB family.

Its subcellular location is the cytoplasm. It carries out the reaction 3-deoxy-alpha-D-manno-oct-2-ulosonate + CTP = CMP-3-deoxy-beta-D-manno-octulosonate + diphosphate. It functions in the pathway nucleotide-sugar biosynthesis; CMP-3-deoxy-D-manno-octulosonate biosynthesis; CMP-3-deoxy-D-manno-octulosonate from 3-deoxy-D-manno-octulosonate and CTP: step 1/1. Its pathway is bacterial outer membrane biogenesis; lipopolysaccharide biosynthesis. In terms of biological role, activates KDO (a required 8-carbon sugar) for incorporation into bacterial lipopolysaccharide in Gram-negative bacteria. The polypeptide is 3-deoxy-manno-octulosonate cytidylyltransferase (Herminiimonas arsenicoxydans).